Consider the following 286-residue polypeptide: Alpha-ketoglutarate-dependent dioxygenase alkB homolog 3 (286 aa).

The tract at residues 1–38 (MEDKRRRARVQGAWAGPAKSQATAQPAPTAENNLQQRP) is disordered. Polar residues predominate over residues 20–36 (SQATAQPAPTAENNLQQ). Substrate is bound by residues W115 and 141–143 (YTY). The Fe2OG dioxygenase domain maps to 172–278 (SFNSLLCNLY…RINLTFRTVY (107 aa)). L177 bears the (4R)-5-hydroxyleucine; alternate mark. Position 177 is a (4R)-5-oxoleucine; alternate (L177). 179–181 (NLY) serves as a coordination point for 2-oxoglutarate. Residues H191 and D193 each contribute to the Fe cation site. D194 contacts substrate. Position 257 (H257) interacts with Fe cation. 2-oxoglutarate is bound by residues 269-275 (RINLTFR) and R275.

Belongs to the alkB family. In terms of assembly, interacts with the ASCC complex composed of ASCC1, ASCC2 and ASCC3. Interacts directly with ASCC3, and is thereby recruited to the ASCC complex. Interacts with OTUD4; the interaction is direct. Interacts with USP7 and USP9X. It depends on Fe(2+) as a cofactor. Ubiquitinated; undergoes 'Lys-48'-linked polyubiquitination. OTUD4 promotes USP7 and USP9X-dependent deubiquitination of 'Lys-48'-polyubiquitinated ALKBH3 promoting the repair of alkylated DNA lesions.

It is found in the nucleus. The protein resides in the cytoplasm. The enzyme catalyses an N(1)-methyladenosine in mRNA + 2-oxoglutarate + O2 = an adenosine in mRNA + formaldehyde + succinate + CO2. It carries out the reaction a methylated nucleobase within DNA + 2-oxoglutarate + O2 = a nucleobase within DNA + formaldehyde + succinate + CO2. The catalysed reaction is an N(1)-methyl-2'-deoxyadenosine in single-stranded DNA + 2-oxoglutarate + O2 = a 2'-deoxyadenosine in single-stranded DNA + formaldehyde + succinate + CO2 + H(+). It catalyses the reaction an N(3)-methyl-2'-deoxycytidine in single-stranded DNA + 2-oxoglutarate + O2 = a 2'-deoxycytidine in single-stranded DNA + formaldehyde + succinate + CO2 + H(+). The enzyme catalyses a 3,N(4)-etheno-2'-deoxycytidine in single-stranded DNA + 2-oxoglutarate + O2 + H2O = a 2'-deoxycytidine in single-stranded DNA + glyoxal + succinate + CO2. With respect to regulation, activated by ascorbate. Its function is as follows. Dioxygenase that mediates demethylation of DNA and RNA containing 1-methyladenosine (m1A). Repairs alkylated DNA containing 1-methyladenosine (m1A) and 3-methylcytosine (m3C) by oxidative demethylation. Has a strong preference for single-stranded DNA. Able to process alkylated m3C within double-stranded regions via its interaction with ASCC3, which promotes DNA unwinding to generate single-stranded substrate needed for ALKBH3. Can repair exocyclic 3,N4-ethenocytosine adducs in single-stranded DNA. Also acts on RNA. Demethylates N(1)-methyladenosine (m1A) RNA, an epigenetic internal modification of messenger RNAs (mRNAs) highly enriched within 5'-untranslated regions (UTRs) and in the vicinity of start codons. Requires molecular oxygen, alpha-ketoglutarate and iron. This chain is Alpha-ketoglutarate-dependent dioxygenase alkB homolog 3, found in Bos taurus (Bovine).